The following is a 338-amino-acid chain: D-erythrose-4-phosphate dehydrogenase (338 aa).

NAD(+) is bound at residue 12–13 (RI). Residues 154–156 (SCT), Arg200, 213–214 (TK), and Arg236 each bind substrate. Cys155 functions as the Nucleophile in the catalytic mechanism. Asn318 lines the NAD(+) pocket.

Belongs to the glyceraldehyde-3-phosphate dehydrogenase family. Epd subfamily. Homotetramer.

The protein localises to the cytoplasm. It carries out the reaction D-erythrose 4-phosphate + NAD(+) + H2O = 4-phospho-D-erythronate + NADH + 2 H(+). It functions in the pathway cofactor biosynthesis; pyridoxine 5'-phosphate biosynthesis; pyridoxine 5'-phosphate from D-erythrose 4-phosphate: step 1/5. In terms of biological role, catalyzes the NAD-dependent conversion of D-erythrose 4-phosphate to 4-phosphoerythronate. The chain is D-erythrose-4-phosphate dehydrogenase from Yersinia enterocolitica serotype O:8 / biotype 1B (strain NCTC 13174 / 8081).